Reading from the N-terminus, the 1253-residue chain is Methionine synthase (1253 aa).

One can recognise a Hcy-binding domain in the interval 6 to 326 (QDEIEAILRK…DHIREIAEAV (321 aa)). Residues cysteine 248, cysteine 311, and cysteine 312 each contribute to the Zn(2+) site. The 262-residue stretch at 359–620 (FVNIGERCNV…IHKDLLQLCE (262 aa)) folds into the Pterin-binding domain. Residues 370–372 (GSR), aspartate 437, asparagine 458, aspartate 525, asparagine 567, arginine 573, and arginine 579 each bind (6S)-5,6,7,8-tetrahydrofolate. In terms of domain architecture, B12-binding N-terminal spans 650-747 (QTDEWRNGSI…FMEKEREEAR (98 aa)). Residues glutamate 697, 770-774 (GDVHD), histidine 773, serine 818, threonine 822, and alanine 874 each bind methylcob(III)alamin. Residues 760 to 895 (QGTIVLATVK…DENLRDDYFE (136 aa)) form the B12-binding domain. In terms of domain architecture, AdoMet activation spans 911–1253 (SLKERKYVPL…LGPILGYDTD (343 aa)). S-adenosyl-L-methionine is bound by residues aspartate 962, arginine 1160, and 1215–1216 (YF). Residue threonine 1252 is modified to Phosphothreonine.

The protein belongs to the vitamin-B12 dependent methionine synthase family. Monomer. Dimer. Forms a multiprotein complex with MMACHC, MMADHC and MTRR. It depends on methylcob(III)alamin as a cofactor. The cofactor is Zn(2+).

It is found in the cytoplasm. The catalysed reaction is (6S)-5-methyl-5,6,7,8-tetrahydrofolate + L-homocysteine = (6S)-5,6,7,8-tetrahydrofolate + L-methionine. Its pathway is amino-acid biosynthesis; L-methionine biosynthesis via de novo pathway; L-methionine from L-homocysteine (MetH route): step 1/1. Catalyzes the transfer of a methyl group from methylcob(III)alamin (MeCbl) to homocysteine, yielding enzyme-bound cob(I)alamin and methionine in the cytosol. MeCbl is an active form of cobalamin (vitamin B12) used as a cofactor for methionine biosynthesis. Cob(I)alamin form is regenerated to MeCbl by a transfer of a methyl group from 5-methyltetrahydrofolate. The processing of cobalamin in the cytosol occurs in a multiprotein complex composed of at least MMACHC, MMADHC, MTRR (methionine synthase reductase) and MTR which may contribute to shuttle safely and efficiently cobalamin towards MTR in order to produce methionine. This chain is Methionine synthase, found in Mus musculus (Mouse).